Consider the following 432-residue polypeptide: Alpha-ketoglutarate permease (432 aa).

Residues 1 to 32 (MAESTVTADSKLTSSDTRRRIWAIVGASSGNL) are Cytoplasmic-facing. The chain crosses the membrane as a helical span at residues 33–53 (VEWFDFYVYSFCSLYFAHIFF). Over 54–62 (PSGNTTTQL) the chain is Periplasmic. A helical transmembrane segment spans residues 63–83 (LQTAGVFAAGFLMRPIGGWLF). Residues 84 to 95 (GRIADKHGRKKS) lie on the Cytoplasmic side of the membrane. Residues 96–116 (MLLSVCMMCFGSLVIACLPGY) traverse the membrane as a helical segment. At 117-118 (ET) the chain is on the periplasmic side. The helical transmembrane segment at 119–139 (IGTWAPALLLLARLFQGLSVG) threads the bilayer. The Cytoplasmic segment spans residues 140–162 (GEYGTSATYMSEVAVEGRKGFYA). Residues 163–183 (SFQYVTLIGGQLLALLVVVVL) traverse the membrane as a helical segment. Over 184 to 193 (QHTMEDAALR) the chain is Periplasmic. Residues 194–214 (EWGWRIPFALGAVLAVVALWL) form a helical membrane-spanning segment. The Cytoplasmic portion of the chain corresponds to 215-243 (RRQLDETSQQETRALKEAGSLKGLWRNRR). A helical membrane pass occupies residues 244 to 264 (AFIMVLGFTAAGSLCFYTFTT). Topologically, residues 265–279 (YMQKYLVNTAGMHAN) are periplasmic. A helical membrane pass occupies residues 280–300 (VASGIMTAALFVFMLIQPLIG). The Cytoplasmic segment spans residues 301 to 309 (ALSDKIGRR). A helical membrane pass occupies residues 310 to 330 (TSMLCFGSLAAIFTVPILSAL). Residues 331-339 (QNVSSPYAA) are Periplasmic-facing. Residues 340-360 (FGLVMCALLIVSFYTSISGIL) form a helical membrane-spanning segment. Residues 361 to 373 (KAEMFPAQVRALG) lie on the Cytoplasmic side of the membrane. Residues 374–394 (VGLSYAVANAIFGGSAEYVAL) form a helical membrane-spanning segment. Residues 395-402 (SLKSIGME) lie on the Periplasmic side of the membrane. A helical transmembrane segment spans residues 403–423 (TAFFWYVTLMAVVAFLVSLML). Residues 424-432 (HRKGKGMRL) lie on the Cytoplasmic side of the membrane.

This sequence belongs to the major facilitator superfamily. Metabolite:H+ Symporter (MHS) family (TC 2.A.1.6) family.

The protein localises to the cell inner membrane. Functionally, uptake of alpha-ketoglutarate across the boundary membrane with the concomitant import of a cation (symport system). This is Alpha-ketoglutarate permease (kgtP) from Escherichia coli (strain K12).